We begin with the raw amino-acid sequence, 2958 residues long: Protein CSF1 (2958 aa).

The Cytoplasmic portion of the chain corresponds to 1–17 (MEAISQLRGVPLTHQKD). Residues 18–38 (FSWVFLVDWILTVVVCLTMIF) traverse the membrane as a helical; Signal-anchor for type II membrane protein segment. Topologically, residues 39 to 2958 (YMGRIYAYLV…QYVKILDDTH (2920 aa)) are extracellular. 10 N-linked (GlcNAc...) asparagine glycosylation sites follow: N82, N117, N144, N271, N478, N530, N816, N821, N839, and N892. The interval 813–834 (GYQNSSLKNESEDKGPMKRSDL) is disordered. Positions 821–834 (NESEDKGPMKRSDL) are enriched in basic and acidic residues. Positions 1175–1196 (MEPSRASFSEDDNDEEADPSSF) are disordered. Positions 1183 to 1192 (SEDDNDEEAD) are enriched in acidic residues. Residues N1309, N1368, N1453, N1785, N1921, N2130, N2146, N2280, N2337, N2520, N2578, N2719, and N2869 are each glycosylated (N-linked (GlcNAc...) asparagine).

This sequence belongs to the CSF1 family. Interacts with MCD4; CSF1 channels phosphatidylethanolamine to MCD4 in the endoplasmic reticulum at contact sites to support GPI anchor biosynthesis.

It localises to the cell membrane. Its subcellular location is the endoplasmic reticulum membrane. The protein localises to the mitochondrion membrane. Tube-forming lipid transport protein which provides phosphatidylethanolamine for glycosylphosphatidylinositol (GPI) anchor synthesis in the endoplasmic reticulum. Required for the glucose and other nutrients uptake at low temperature. This Saccharomyces cerevisiae (strain ATCC 204508 / S288c) (Baker's yeast) protein is Protein CSF1.